Reading from the N-terminus, the 89-residue chain is Cytochrome c6 (89 aa).

Residues Cys-14, Cys-17, His-18, and Met-62 each coordinate heme c.

It belongs to the cytochrome c family. PetJ subfamily. In terms of assembly, monomer. Homodimer, or even higher oligomerization, in crystal structures. In terms of processing, binds 1 heme c group covalently per subunit.

Its subcellular location is the cellular thylakoid lumen. Functionally, functions as an electron carrier between membrane-bound cytochrome b6-f and photosystem I in oxygenic photosynthesis. The protein is Cytochrome c6 (petJ) of Limnospira maxima (Arthrospira maxima).